The chain runs to 406 residues: Tryptophan synthase beta chain (406 aa).

Lys-99 is subject to N6-(pyridoxal phosphate)lysine.

It belongs to the TrpB family. As to quaternary structure, tetramer of two alpha and two beta chains. Requires pyridoxal 5'-phosphate as cofactor.

The enzyme catalyses (1S,2R)-1-C-(indol-3-yl)glycerol 3-phosphate + L-serine = D-glyceraldehyde 3-phosphate + L-tryptophan + H2O. Its pathway is amino-acid biosynthesis; L-tryptophan biosynthesis; L-tryptophan from chorismate: step 5/5. Its function is as follows. The beta subunit is responsible for the synthesis of L-tryptophan from indole and L-serine. This is Tryptophan synthase beta chain from Rhizobium johnstonii (strain DSM 114642 / LMG 32736 / 3841) (Rhizobium leguminosarum bv. viciae).